The primary structure comprises 642 residues: 1-deoxy-D-xylulose-5-phosphate synthase (642 aa).

Thiamine diphosphate contacts are provided by residues His79 and 120-122 (GHS). A Mg(2+)-binding site is contributed by Asp151. Thiamine diphosphate is bound by residues 152-153 (GS), Asn180, Tyr290, and Glu372. Mg(2+) is bound at residue Asn180.

Belongs to the transketolase family. DXPS subfamily. As to quaternary structure, homodimer. Requires Mg(2+) as cofactor. Thiamine diphosphate serves as cofactor.

It carries out the reaction D-glyceraldehyde 3-phosphate + pyruvate + H(+) = 1-deoxy-D-xylulose 5-phosphate + CO2. It functions in the pathway metabolic intermediate biosynthesis; 1-deoxy-D-xylulose 5-phosphate biosynthesis; 1-deoxy-D-xylulose 5-phosphate from D-glyceraldehyde 3-phosphate and pyruvate: step 1/1. Its function is as follows. Catalyzes the acyloin condensation reaction between C atoms 2 and 3 of pyruvate and glyceraldehyde 3-phosphate to yield 1-deoxy-D-xylulose-5-phosphate (DXP). This is 1-deoxy-D-xylulose-5-phosphate synthase from Rhodospirillum centenum (strain ATCC 51521 / SW).